The sequence spans 580 residues: MDVTKSLLCFISFVAFLLFSSVAEANKAHHHEFIIQATKVKRLCETHNSITVNGMFPGPMLVVNNGDTLVVKVINRARYNITIHWHGVRQMRTGWADGPEFVTQCPIRPGSSYTYRFTIQGQEGTLWWHAHSSWLRATVYGSLLVFPPAGSSYPFTKPHRNVPLLLGEWWDANPVDVLRESIRTGGAPNNSDAYTINGQPGDLYKCSSQDTTVVPINVGETILLRVINSALNQPLFFTVANHKLTVVGADASYLKPFTTNVIVLGPGQTTDVLITGDQPPNRYYMAARAYQSAQNAPFGNTTTTAILQYKSAPCCGVGGGSGTKKGNSFKPIMPILPAYNDTNTVTRFSQSFRSLRRAEVPTEIDENLFVTIGLGLNNCPKNFRSRRCQGPNGTRFTASMNNVSFALPSNYSLLQAHHHGIPGVFTTDFPAKPPVKFDYTGNNISRSLYQPDRGTKLYKLKYGSRVQIVLQDTGIVTPENHPIHLHGYDFYIIAEGFGNFNPKKDTAKFNLEDPPLRNTVGVPVNGWAVIRFIADNPGVWIMHCHLDAHISWGLAMAFLVENGNGVLQTIEQPPHDLPVC.

Residues 1-25 form the signal peptide; it reads MDVTKSLLCFISFVAFLLFSSVAEA. 2 Plastocyanin-like domains span residues 34–150 and 160–312; these read IIQA…PPAG and RNVP…YKSA. Asparagine 80 carries an N-linked (GlcNAc...) asparagine glycan. Cu cation-binding residues include histidine 84, histidine 86, histidine 129, and histidine 131. N-linked (GlcNAc...) asparagine glycosylation is found at asparagine 189, asparagine 300, asparagine 340, asparagine 392, asparagine 402, asparagine 410, and asparagine 443. The Plastocyanin-like 3 domain occupies 428–564; that stretch reads DFPAKPPVKF…AMAFLVENGN (137 aa). Residues histidine 481, histidine 484, histidine 486, histidine 543, cysteine 544, histidine 545, and histidine 549 each coordinate Cu cation.

Belongs to the multicopper oxidase family. The cofactor is Cu cation. In terms of tissue distribution, ubiquitous and constitutive.

Its subcellular location is the secreted. It localises to the extracellular space. The protein resides in the apoplast. The enzyme catalyses 4 hydroquinone + O2 = 4 benzosemiquinone + 2 H2O. Its function is as follows. Lignin degradation and detoxification of lignin-derived products. This Arabidopsis thaliana (Mouse-ear cress) protein is Laccase-5 (LAC5).